Consider the following 310-residue polypeptide: Ornithine carbamoyltransferase (310 aa).

Carbamoyl phosphate contacts are provided by residues 58 to 61, Gln85, Arg109, and 136 to 139; these read STRT and HPCQ. L-ornithine-binding positions include Asn167, Asp227, and 231 to 232; that span reads SM. Carbamoyl phosphate-binding positions include 266–267 and Arg294; that span reads CL.

It belongs to the aspartate/ornithine carbamoyltransferase superfamily. OTCase family.

The protein localises to the cytoplasm. The enzyme catalyses carbamoyl phosphate + L-ornithine = L-citrulline + phosphate + H(+). Its pathway is amino-acid biosynthesis; L-arginine biosynthesis; L-arginine from L-ornithine and carbamoyl phosphate: step 1/3. In terms of biological role, reversibly catalyzes the transfer of the carbamoyl group from carbamoyl phosphate (CP) to the N(epsilon) atom of ornithine (ORN) to produce L-citrulline. This Rhodopseudomonas palustris (strain ATCC BAA-98 / CGA009) protein is Ornithine carbamoyltransferase.